The sequence spans 258 residues: F-box/LRR-repeat protein 25 (258 aa).

Residues 27-76 enclose the F-box domain; sequence SDSISNLPDEILHHILSFIPETNLVIRTSVLSKRWRHVWSKTPHLSFEWL. LRR repeat units lie at residues 101–130, 136–161, 177–202, and 224–249; these read CTSYSYEAGHVHSSIEFAMSHNVDNLSLAF, CNKFPDFFYTSSSLKRVELRSASLTP, RCNLSDKSFLKILSGCPILESLSLKF, and RRSCFREPMQSMQIVAPHIHYLRLRD.

The protein is F-box/LRR-repeat protein 25 (FBL25) of Arabidopsis thaliana (Mouse-ear cress).